Here is a 701-residue protein sequence, read N- to C-terminus: Sulfate anion transporter 1 (701 aa).

The tract at residues 1 to 20 (MDESPEPLQQGRGPVPVRRQ) is disordered. Helical transmembrane passes span 68–90 (YLAG…AIAY) and 94–116 (AGLQ…FLMG). 2 N-linked (GlcNAc...) asparagine glycosylation sites follow: Asn158 and Asn163. Transmembrane regions (helical) follow at residues 176–198 (YAIR…MGVL), 255–277 (GAGQ…LLAA), 290–309 (VPLP…SHFG), 342–364 (ALDA…EMFA), 377–399 (LLAV…SAAL), 412–434 (TQLS…APLF), and 472–494 (LVWA…LAGV). An STAS domain is found at 527 to 687 (EFEGLVPEPG…LSVHDAVQTA (161 aa)).

The protein belongs to the SLC26A/SulP transporter (TC 2.A.53) family. As to expression, expressed most abundantly in the kidney and liver, with lower levels in the pancreas, testis, brain, small intestine, colon, and lung.

It is found in the cell membrane. The protein resides in the basolateral cell membrane. It carries out the reaction thiosulfate(in) + sulfate(out) = thiosulfate(out) + sulfate(in). The catalysed reaction is 2 hydrogencarbonate(out) + sulfate(in) = 2 hydrogencarbonate(in) + sulfate(out). It catalyses the reaction oxalate(in) + sulfate(out) = oxalate(out) + sulfate(in). The enzyme catalyses oxalate(in) + 2 hydrogencarbonate(out) = oxalate(out) + 2 hydrogencarbonate(in). Sodium-independent sulfate anion transporter. Can transport other anions including bicarbonate, thiosulfate and oxalate by mediating sulfate-thiosulfate, sulfate-hydrogencarbonate and sulfate-oxalate anion exchange. Mediates oxalate-hydrogencarbonate anion exchange. The sequence is that of Sulfate anion transporter 1 (SLC26A1) from Homo sapiens (Human).